We begin with the raw amino-acid sequence, 163 residues long: 2-C-methyl-D-erythritol 2,4-cyclodiphosphate synthase (163 aa).

The a divalent metal cation site is built by Asp12 and His14. 4-CDP-2-C-methyl-D-erythritol 2-phosphate contacts are provided by residues Asp12–His14 and His38–Ser39. His46 is an a divalent metal cation binding site. Residues Asp60–Gly62, Thr136–Glu139, Phe143, and Arg146 contribute to the 4-CDP-2-C-methyl-D-erythritol 2-phosphate site.

It belongs to the IspF family. In terms of assembly, homotrimer. The cofactor is a divalent metal cation.

The enzyme catalyses 4-CDP-2-C-methyl-D-erythritol 2-phosphate = 2-C-methyl-D-erythritol 2,4-cyclic diphosphate + CMP. The protein operates within isoprenoid biosynthesis; isopentenyl diphosphate biosynthesis via DXP pathway; isopentenyl diphosphate from 1-deoxy-D-xylulose 5-phosphate: step 4/6. Involved in the biosynthesis of isopentenyl diphosphate (IPP) and dimethylallyl diphosphate (DMAPP), two major building blocks of isoprenoid compounds. Catalyzes the conversion of 4-diphosphocytidyl-2-C-methyl-D-erythritol 2-phosphate (CDP-ME2P) to 2-C-methyl-D-erythritol 2,4-cyclodiphosphate (ME-CPP) with a corresponding release of cytidine 5-monophosphate (CMP). The chain is 2-C-methyl-D-erythritol 2,4-cyclodiphosphate synthase from Xanthomonas campestris pv. campestris (strain 8004).